We begin with the raw amino-acid sequence, 163 residues long: Probable ribosome biogenesis protein RLP24 (163 aa).

It belongs to the eukaryotic ribosomal protein eL24 family. In terms of assembly, associated with nucleolar and cytoplasmic pre-60S particles. At the end of biogenesis it dissociates from cytoplasmic pre-60S particles and is likely to be exchanged for its ribosomal homolog, RPL24.

The protein resides in the nucleus. The protein localises to the nucleolus. Functionally, involved in the biogenesis of the 60S ribosomal subunit. Ensures the docking of GTPBP4/NOG1 to pre-60S particles. The sequence is that of Probable ribosome biogenesis protein RLP24 (RSL24D1) from Bos taurus (Bovine).